Here is a 315-residue protein sequence, read N- to C-terminus: Replication factor C small subunit (315 aa).

43–50 (GSPGVGKT) serves as a coordination point for ATP.

It belongs to the activator 1 small subunits family. RfcS subfamily. Heteromultimer composed of small subunits (RfcS) and large subunits (RfcL).

Part of the RFC clamp loader complex which loads the PCNA sliding clamp onto DNA. The polypeptide is Replication factor C small subunit (Methanococcus maripaludis (strain C6 / ATCC BAA-1332)).